Reading from the N-terminus, the 27-residue chain is Cupiennin-4a (27 aa).

E27 is subject to Glutamic acid 1-amide.

Expressed by the venom gland.

The protein resides in the secreted. This chain is Cupiennin-4a, found in Cupiennius salei (American wandering spider).